Consider the following 330-residue polypeptide: Tetraacyldisaccharide 4'-kinase (330 aa).

Residue 58-65 (TVGGSGKT) coordinates ATP.

This sequence belongs to the LpxK family.

The catalysed reaction is a lipid A disaccharide + ATP = a lipid IVA + ADP + H(+). The protein operates within glycolipid biosynthesis; lipid IV(A) biosynthesis; lipid IV(A) from (3R)-3-hydroxytetradecanoyl-[acyl-carrier-protein] and UDP-N-acetyl-alpha-D-glucosamine: step 6/6. Its function is as follows. Transfers the gamma-phosphate of ATP to the 4'-position of a tetraacyldisaccharide 1-phosphate intermediate (termed DS-1-P) to form tetraacyldisaccharide 1,4'-bis-phosphate (lipid IVA). The protein is Tetraacyldisaccharide 4'-kinase of Shewanella pealeana (strain ATCC 700345 / ANG-SQ1).